Consider the following 122-residue polypeptide: Holo-[acyl-carrier-protein] synthase (122 aa).

Residues Asp8 and Glu52 each coordinate Mg(2+).

The protein belongs to the P-Pant transferase superfamily. AcpS family. Mg(2+) is required as a cofactor.

The protein resides in the cytoplasm. It catalyses the reaction apo-[ACP] + CoA = holo-[ACP] + adenosine 3',5'-bisphosphate + H(+). Transfers the 4'-phosphopantetheine moiety from coenzyme A to a Ser of acyl-carrier-protein. This chain is Holo-[acyl-carrier-protein] synthase, found in Lachnoclostridium phytofermentans (strain ATCC 700394 / DSM 18823 / ISDg) (Clostridium phytofermentans).